A 212-amino-acid chain; its full sequence is Regulatory protein RecX (212 aa).

This sequence belongs to the RecX family.

The protein resides in the cytoplasm. Modulates RecA activity. This is Regulatory protein RecX from Clostridium botulinum (strain Eklund 17B / Type B).